A 211-amino-acid chain; its full sequence is Transcriptional regulatory protein RcsA (211 aa).

The HTH luxR-type domain maps to 135-200; that stretch reads LDVHPLTLSQ…VIYHVVRLTD (66 aa). The H-T-H motif DNA-binding region spans 159-178; sequence TIQISDKMQIKAKTVSSHKG.

This sequence belongs to the RcsA family.

Its function is as follows. Component of the Rcs signaling system, which controls transcription of numerous genes. Binds to DNA to regulate expression of genes. The chain is Transcriptional regulatory protein RcsA from Pantoea stewartii subsp. stewartii (Erwinia stewartii).